The following is a 506-amino-acid chain: Probable UTP--glucose-1-phosphate uridylyltransferase (506 aa).

2 positions are modified to phosphoserine: serine 15 and serine 17. UTP is bound by residues 115 to 118, lysine 129, glutamine 192, and glycine 221; that span reads LNGG. A substrate-binding site is contributed by 117-118; it reads GG. Lysine 129 serves as a coordination point for Mg(2+). Substrate contacts are provided by residues histidine 222 and 250–252; that span reads NID. 2 residues coordinate UTP: aspartate 252 and lysine 394. Aspartate 252 serves as a coordination point for Mg(2+). Residue lysine 394 is part of the active site. An oligomerization region spans residues 455 to 506; sequence HLTITGDVNIGRNVTLKGTVIIVASDANRIDIPNGSVLENCVITGNLNILEH.

Belongs to the UDPGP type 1 family. As to quaternary structure, homooctamer.

It localises to the cytoplasm. The protein resides in the nucleus. It catalyses the reaction alpha-D-glucose 1-phosphate + UTP + H(+) = UDP-alpha-D-glucose + diphosphate. Functionally, plays a central role as a glucosyl donor in cellular metabolic pathways. This is Probable UTP--glucose-1-phosphate uridylyltransferase (fyu1) from Schizosaccharomyces pombe (strain 972 / ATCC 24843) (Fission yeast).